A 448-amino-acid chain; its full sequence is N-succinylarginine dihydrolase (448 aa).

Substrate is bound by residues 19–28 (AGLSSGNIAS), Asn-110, and 137–138 (HR). The active site involves Glu-174. Arg-216 serves as a coordination point for substrate. His-252 is a catalytic residue. Residues Asp-254 and Asn-366 each contribute to the substrate site. Residue Cys-372 is the Nucleophile of the active site.

Belongs to the succinylarginine dihydrolase family. As to quaternary structure, homodimer.

The catalysed reaction is N(2)-succinyl-L-arginine + 2 H2O + 2 H(+) = N(2)-succinyl-L-ornithine + 2 NH4(+) + CO2. Its pathway is amino-acid degradation; L-arginine degradation via AST pathway; L-glutamate and succinate from L-arginine: step 2/5. In terms of biological role, catalyzes the hydrolysis of N(2)-succinylarginine into N(2)-succinylornithine, ammonia and CO(2). This Legionella pneumophila (strain Lens) protein is N-succinylarginine dihydrolase.